An 89-amino-acid chain; its full sequence is Small ribosomal subunit protein uS15 (89 aa).

The protein belongs to the universal ribosomal protein uS15 family. In terms of assembly, part of the 30S ribosomal subunit. Forms a bridge to the 50S subunit in the 70S ribosome, contacting the 23S rRNA.

Functionally, one of the primary rRNA binding proteins, it binds directly to 16S rRNA where it helps nucleate assembly of the platform of the 30S subunit by binding and bridging several RNA helices of the 16S rRNA. Its function is as follows. Forms an intersubunit bridge (bridge B4) with the 23S rRNA of the 50S subunit in the ribosome. The polypeptide is Small ribosomal subunit protein uS15 (Chlorobium phaeovibrioides (strain DSM 265 / 1930) (Prosthecochloris vibrioformis (strain DSM 265))).